A 156-amino-acid chain; its full sequence is CRIB domain-containing protein RIC10 (156 aa).

In terms of domain architecture, CRIB spans 30 to 43; sequence IGFPTDVKHVAHIG. Polar residues predominate over residues 68-77; it reads RPSSFSNARP. Residues 68–156 form a disordered region; that stretch reads RPSSFSNARP…SYKSTVSRLI (89 aa). Low complexity predominate over residues 78–96; the sequence is STSFFTSSSSTDFDQGSSQ. The segment covering 117–128 has biased composition (basic residues); the sequence is NNKKKSSRRKKS. The segment covering 129 to 156 has biased composition (low complexity); it reads SSSSSSPKSSRSSVLSKSSYKSTVSRLI.

As to expression, expressed in roots, leaves, flowers and pollen.

It is found in the cytoplasm. Functionally, functions as a downstream effector of Rho-related GTP binding proteins of the 'Rho of Plants' (ROPs) family. Participates in the propagation of ROP GTPase signals in specific cellular responses. Is involved in pollen tube growth regulation. The protein is CRIB domain-containing protein RIC10 (RIC10) of Arabidopsis thaliana (Mouse-ear cress).